Reading from the N-terminus, the 91-residue chain is Probable Fe(2+)-trafficking protein (91 aa).

The protein belongs to the Fe(2+)-trafficking protein family.

Could be a mediator in iron transactions between iron acquisition and iron-requiring processes, such as synthesis and/or repair of Fe-S clusters in biosynthetic enzymes. This Paraburkholderia phymatum (strain DSM 17167 / CIP 108236 / LMG 21445 / STM815) (Burkholderia phymatum) protein is Probable Fe(2+)-trafficking protein.